Here is a 739-residue protein sequence, read N- to C-terminus: Phosphoribosylformylglycinamidine synthase subunit PurL (739 aa).

The active site involves His53. ATP is bound by residues Tyr56 and Lys95. Mg(2+) is bound at residue Glu97. Residues 98-101 (SHNH) and Arg120 contribute to the substrate site. His99 (proton acceptor) is an active-site residue. Asp121 is a Mg(2+) binding site. Substrate is bound at residue Gln244. A Mg(2+)-binding site is contributed by Asp274. 318-320 (ESQ) lines the substrate pocket. Positions 501 and 538 each coordinate ATP. Residue Asn539 participates in Mg(2+) binding. Residue Ser541 participates in substrate binding.

The protein belongs to the FGAMS family. In terms of assembly, monomer. Part of the FGAM synthase complex composed of 1 PurL, 1 PurQ and 2 PurS subunits.

Its subcellular location is the cytoplasm. It catalyses the reaction N(2)-formyl-N(1)-(5-phospho-beta-D-ribosyl)glycinamide + L-glutamine + ATP + H2O = 2-formamido-N(1)-(5-O-phospho-beta-D-ribosyl)acetamidine + L-glutamate + ADP + phosphate + H(+). It functions in the pathway purine metabolism; IMP biosynthesis via de novo pathway; 5-amino-1-(5-phospho-D-ribosyl)imidazole from N(2)-formyl-N(1)-(5-phospho-D-ribosyl)glycinamide: step 1/2. Part of the phosphoribosylformylglycinamidine synthase complex involved in the purines biosynthetic pathway. Catalyzes the ATP-dependent conversion of formylglycinamide ribonucleotide (FGAR) and glutamine to yield formylglycinamidine ribonucleotide (FGAM) and glutamate. The FGAM synthase complex is composed of three subunits. PurQ produces an ammonia molecule by converting glutamine to glutamate. PurL transfers the ammonia molecule to FGAR to form FGAM in an ATP-dependent manner. PurS interacts with PurQ and PurL and is thought to assist in the transfer of the ammonia molecule from PurQ to PurL. This Listeria monocytogenes serotype 4b (strain CLIP80459) protein is Phosphoribosylformylglycinamidine synthase subunit PurL.